The sequence spans 583 residues: MMSRLNSVVIKLWLTIILIVTTVLILLSIALITFMQYYFTQETENAIREDARRISSLVEQSHNKEEAIKYSQTLIENPGGLMIINNKHRQSTASLSNIKKQMLNEVVNNDHFDDVFDKGKSVTRNVTIKEKGSSQTYILLGYPTKAQKNSHSKYSGVFIYKDLKSIEDTNNAITIITIITAVIFLTITTVFAFFLSSRITKPLRRLRDQATRVSEGDYSYKPSVTTKDEIGQLSQAFNQMSTEIEEHVDALSTSKNIRDSLINSMVEGVLGINESRQIILSNKMANDIMDNIDEDAKAFLLRQIEDTFKSKQTEMRDLEMNTRFFVVTTSYIDKIEQGGKSGVVVTVRDMTNEHNLDQMKKDFIANVSHELRTPISLLQGYTESIVDGIVTEPDEIKESLAIVLDESKRLNRLVNELLNVARMDAEGLSVNKEVQPIAALLDKMKIKYRQQADDLGLNMTFNYCKKRVWSYDMDRMDQVLTNLIDNASRYTKPGDEIAITCDENESEDILYIKDTGTGIAPEHLQQVFDRFYKVDAARTRGKQGTGLGLFICKMIIEEHGGSIDVKSELGKGTTFIIKLPKPE.

Residues 1 to 11 (MMSRLNSVVIK) are Cytoplasmic-facing. Residues 12–32 (LWLTIILIVTTVLILLSIALI) form a helical membrane-spanning segment. The Extracellular portion of the chain corresponds to 33–174 (TFMQYYFTQE…SIEDTNNAIT (142 aa)). A helical membrane pass occupies residues 175–195 (IITIITAVIFLTITTVFAFFL). Residues 196 to 583 (SSRITKPLRR…TFIIKLPKPE (388 aa)) are Cytoplasmic-facing. Positions 197–249 (SRITKPLRRLRDQATRVSEGDYSYKPSVTTKDEIGQLSQAFNQMSTEIEEHVD) constitute an HAMP domain. The 218-residue stretch at 366-583 (NVSHELRTPI…TFIIKLPKPE (218 aa)) folds into the Histidine kinase domain. The residue at position 369 (histidine 369) is a Phosphohistidine; by autocatalysis.

Its subcellular location is the cell membrane. The catalysed reaction is ATP + protein L-histidine = ADP + protein N-phospho-L-histidine.. In terms of biological role, member of the two-component regulatory system SrrA/SrrB, which is involved in the global regulation of staphylococcal virulence factors in response to environmental oxygen levels as well as biofilm formation. Also plays an essential role in host-derived nitric oxide resistance by regulating hmp/flavohemoglobin, an enzyme that detoxifies nitric oxide by converting it to nitrate. Functions as a sensor protein kinase which is autophosphorylated at a histidine residue and transfers its phosphate group to SrrA. In turn, SrrA binds to the upstream promoter regions of the target genes to positively and negatively regulate their expression. This chain is Sensor protein SrrB (srrB), found in Staphylococcus aureus.